We begin with the raw amino-acid sequence, 218 residues long: Large ribosomal subunit protein bL25 (218 aa).

The interval 187–218 is disordered; the sequence is SATAAVEEAKEDGAPEESAQGQGAAEAQETGK. Positions 202–218 are enriched in low complexity; that stretch reads EESAQGQGAAEAQETGK.

It belongs to the bacterial ribosomal protein bL25 family. CTC subfamily. As to quaternary structure, part of the 50S ribosomal subunit; part of the 5S rRNA/L5/L18/L25 subcomplex. Contacts the 5S rRNA. Binds to the 5S rRNA independently of L5 and L18.

Functionally, this is one of the proteins that binds to the 5S RNA in the ribosome where it forms part of the central protuberance. The chain is Large ribosomal subunit protein bL25 from Anaplasma marginale (strain Florida).